Here is a 625-residue protein sequence, read N- to C-terminus: MRILLIHSDYIEYEVKDKAIKNPEPISEEEKKGRMDEVLVAFISVEKVDETNPEEVVSKAVEEIINVASQVKAENVFVYPFAHLSSELAKPSVAQEILRKVYEGLKEKGYNVGKAPFGYYKAFKISCKGHPLAELSRTIIPEGAKEEEVPEALKKEETELVSYWYILTPEGELIEVDKFDFTGYENLRKFANYEISKSRIAEKEPPHVKLMLEHELVDYEPGSDPGNLRYYPKGRLIKSLLEQYVTEKVIEYGAMEVETPVMYDFEHPALEKYLNRFPARQYIVLSGDKKYFLRFAACFGQFLISKDAVISYRHLPLRMYELTRYSFRREKRGELSGLRRLRAFTMPDMHTLAKDLEQAKDEFKKQFKLSMEVLKGVGLTPEDYEVAIRFTEDFWKENRDFIVELVKIIGKPVLIEMWKQRFFYFILKFEFNFVDNLDKAAALSTVQIDVENAERFGIKYYDENGEEKYPLILHCSPSGAIERVMYAILEKQAKLMQEGKKPMLPLWLSPIQVRVIPVSEEYLDYALYIAGKLEGARIRVDVDDEDERLNKKIRRAEKEWIPYIVVVGAKEKESGTITVRRREDGKQYETRLEELIKEIKEKVEGFPYKPRPLPLLLSKRPKFRG.

The interval 1-143 (MRILLIHSDY…ELSRTIIPEG (143 aa)) is editing domain. The interval 206-505 (PHVKLMLEHE…MQEGKKPMLP (300 aa)) is catalytic. The Zn(2+) site is built by Cys-298, His-350, and His-474.

Belongs to the class-II aminoacyl-tRNA synthetase family. As to quaternary structure, homodimer. The cofactor is Zn(2+).

It is found in the cytoplasm. It carries out the reaction tRNA(Thr) + L-threonine + ATP = L-threonyl-tRNA(Thr) + AMP + diphosphate + H(+). Functionally, catalyzes the attachment of threonine to tRNA(Thr) in a two-step reaction: L-threonine is first activated by ATP to form Thr-AMP and then transferred to the acceptor end of tRNA(Thr). Also edits incorrectly charged L-seryl-tRNA(Thr). The polypeptide is Threonine--tRNA ligase (Pyrococcus horikoshii (strain ATCC 700860 / DSM 12428 / JCM 9974 / NBRC 100139 / OT-3)).